A 197-amino-acid polypeptide reads, in one-letter code: FMN-dependent NADH:quinone oxidoreductase (197 aa).

Ser-10 contributes to the FMN binding site.

It belongs to the azoreductase type 1 family. In terms of assembly, homodimer. It depends on FMN as a cofactor.

It carries out the reaction 2 a quinone + NADH + H(+) = 2 a 1,4-benzosemiquinone + NAD(+). It catalyses the reaction N,N-dimethyl-1,4-phenylenediamine + anthranilate + 2 NAD(+) = 2-(4-dimethylaminophenyl)diazenylbenzoate + 2 NADH + 2 H(+). Quinone reductase that provides resistance to thiol-specific stress caused by electrophilic quinones. In terms of biological role, also exhibits azoreductase activity. Catalyzes the reductive cleavage of the azo bond in aromatic azo compounds to the corresponding amines. The polypeptide is FMN-dependent NADH:quinone oxidoreductase (Mycoplasma genitalium (strain ATCC 33530 / DSM 19775 / NCTC 10195 / G37) (Mycoplasmoides genitalium)).